We begin with the raw amino-acid sequence, 214 residues long: Pyridoxine/pyridoxamine 5'-phosphate oxidase (214 aa).

Residues 8–11 and lysine 67 each bind substrate; that span reads RKSY. Residues 62–67, 77–78, lysine 84, and glutamine 106 contribute to the FMN site; these read RVVLLK and YT. Residues tyrosine 124, arginine 128, and serine 132 each coordinate substrate. Residues 141-142 and tryptophan 186 contribute to the FMN site; that span reads QS. Position 192–194 (192–194) interacts with substrate; it reads RLH. Residue arginine 196 participates in FMN binding.

Belongs to the pyridoxamine 5'-phosphate oxidase family. As to quaternary structure, homodimer. The cofactor is FMN.

The catalysed reaction is pyridoxamine 5'-phosphate + O2 + H2O = pyridoxal 5'-phosphate + H2O2 + NH4(+). It catalyses the reaction pyridoxine 5'-phosphate + O2 = pyridoxal 5'-phosphate + H2O2. The protein operates within cofactor metabolism; pyridoxal 5'-phosphate salvage; pyridoxal 5'-phosphate from pyridoxamine 5'-phosphate: step 1/1. It participates in cofactor metabolism; pyridoxal 5'-phosphate salvage; pyridoxal 5'-phosphate from pyridoxine 5'-phosphate: step 1/1. Catalyzes the oxidation of either pyridoxine 5'-phosphate (PNP) or pyridoxamine 5'-phosphate (PMP) into pyridoxal 5'-phosphate (PLP). The chain is Pyridoxine/pyridoxamine 5'-phosphate oxidase from Flavobacterium psychrophilum (strain ATCC 49511 / DSM 21280 / CIP 103535 / JIP02/86).